We begin with the raw amino-acid sequence, 453 residues long: Armadillo repeat-containing X-linked protein 1 (453 aa).

Topologically, residues M1–E6 are mitochondrial intermembrane. Mitochondrion outer membrane (MOM)-targeting sequence stretches follow at residues M1–E6 and R26–K36. A helical; Signal-anchor transmembrane segment spans residues A7 to W29. Residues G30 to L453 are Cytoplasmic-facing. 2 disordered regions span residues A58–K77 and I132–A182. Over residues G167 to S177 the composition is skewed to basic residues. ARM repeat units lie at residues P195 to A235, S237 to V276, P358 to D398, and S415 to L453.

Belongs to the eutherian X-chromosome-specific Armcx family. Interacts with MIRO1. As to expression, expressed at high levels ovary, heart, testis, prostate, brain, spleen and colon. Expressed at very low levels in liver and thymus. Not expressed in peripheral blood leukocytes. Not or reduced expressed in lung, prostate, colon, pancreas and ovarian carcinomas.

Its subcellular location is the mitochondrion. The protein resides in the mitochondrion outer membrane. Regulates mitochondrial transport during axon regeneration. Increases the proportion of motile mitochondria by recruiting stationary mitochondria into the motile pool. Enhances mitochondria movement and neurite growth in both adult axons and embryonic neurons. Promotes neuronal survival and axon regeneration after nerve injury. May link mitochondria to the Trak1-kinesin motor complex via its interaction with MIRO1. The sequence is that of Armadillo repeat-containing X-linked protein 1 (ARMCX1) from Homo sapiens (Human).